Here is a 158-residue protein sequence, read N- to C-terminus: Ecotin (158 aa).

Positions Met1 to Ala21 are cleaved as a signal peptide. Cys67 and Cys104 are joined by a disulfide.

This sequence belongs to the protease inhibitor I11 (ecotin) family. As to quaternary structure, homodimer.

It is found in the periplasm. Functionally, general inhibitor of family S1 serine proteases. This Pseudomonas fluorescens (strain ATCC BAA-477 / NRRL B-23932 / Pf-5) protein is Ecotin.